A 118-amino-acid chain; its full sequence is D-dopachrome decarboxylase-B (118 aa).

Residue P2 is modified to N-acetylproline.

It belongs to the MIF family. Homotrimer.

It localises to the cytoplasm. It carries out the reaction D-dopachrome + H(+) = 5,6-dihydroxyindole + CO2. In terms of biological role, tautomerization of D-dopachrome with decarboxylation to give 5,6-dihydroxyindole (DHI). The protein is D-dopachrome decarboxylase-B (ddt-b) of Xenopus laevis (African clawed frog).